Reading from the N-terminus, the 334-residue chain is Protein POLAR-like 1 (334 aa).

The span at 53–63 (IRTSSEDDHHR) shows a compositional bias: basic and acidic residues. A disordered region spans residues 53 to 74 (IRTSSEDDHHRVGQFSDSPPPT). Positions 273–300 (ETRQQEEIKELEIALDDAKQRLHLKETE) form a coiled coil.

It localises to the cytoplasm. Its subcellular location is the cell cortex. Acts as a stomatal lineage scaffold which regulates subcellular localization and transient polarization of kinases (e.g. ASK7/BIN2 and ASK3/SK12) involved in asymmetric cell division (ACD) in a BASL-dependent manner. This chain is Protein POLAR-like 1, found in Arabidopsis thaliana (Mouse-ear cress).